The following is a 491-amino-acid chain: Monothiol glutaredoxin-S11 (491 aa).

Glutaredoxin domains are found at residues 151–253, 287–389, and 394–491; these read NKRL…NIPL, KERL…GIVA, and EDRL…TLSE. A glutathione-binding site is contributed by lysine 411. [2Fe-2S] cluster is bound at residue cysteine 419. Residues arginine 448, phenylalanine 460, and 473–474 contribute to the glutathione site; that span reads CD.

It belongs to the glutaredoxin family. CGFS subfamily.

It localises to the cytoplasm. In terms of biological role, may only reduce GSH-thiol disulfides, but not protein disulfides. The sequence is that of Monothiol glutaredoxin-S11 (GRXS11) from Oryza sativa subsp. japonica (Rice).